Here is a 298-residue protein sequence, read N- to C-terminus: N-acetylmuramic acid 6-phosphate etherase (298 aa).

An SIS domain is found at 55-218 (IHAQVSGGGR…STGLMIKSGK (164 aa)). Glu-83 functions as the Proton donor in the catalytic mechanism. The active site involves Glu-114.

The protein belongs to the GCKR-like family. MurNAc-6-P etherase subfamily. Homodimer.

It catalyses the reaction N-acetyl-D-muramate 6-phosphate + H2O = N-acetyl-D-glucosamine 6-phosphate + (R)-lactate. It participates in amino-sugar metabolism; 1,6-anhydro-N-acetylmuramate degradation. Its pathway is amino-sugar metabolism; N-acetylmuramate degradation. It functions in the pathway cell wall biogenesis; peptidoglycan recycling. Functionally, specifically catalyzes the cleavage of the D-lactyl ether substituent of MurNAc 6-phosphate, producing GlcNAc 6-phosphate and D-lactate. Together with AnmK, is also required for the utilization of anhydro-N-acetylmuramic acid (anhMurNAc) either imported from the medium or derived from its own cell wall murein, and thus plays a role in cell wall recycling. The polypeptide is N-acetylmuramic acid 6-phosphate etherase (Escherichia coli O81 (strain ED1a)).